The primary structure comprises 292 residues: ATP synthase gamma chain (292 aa).

Belongs to the ATPase gamma chain family. F-type ATPases have 2 components, CF(1) - the catalytic core - and CF(0) - the membrane proton channel. CF(1) has five subunits: alpha(3), beta(3), gamma(1), delta(1), epsilon(1). CF(0) has three main subunits: a, b and c.

The protein localises to the cell inner membrane. Functionally, produces ATP from ADP in the presence of a proton gradient across the membrane. The gamma chain is believed to be important in regulating ATPase activity and the flow of protons through the CF(0) complex. The sequence is that of ATP synthase gamma chain from Hydrogenobaculum sp. (strain Y04AAS1).